The chain runs to 148 residues: Transcriptional repressor NrdR (148 aa).

Residues 1–22 are disordered; the sequence is MKCPYCSAPDSKVVNSRPSDDG. The segment at 3–34 is a zinc-finger region; it reads CPYCSAPDSKVVNSRPSDDGASIRRRRECLNC. The region spanning 49-136 is the ATP-cone domain; the sequence is LMVVKRSGPR…VYRDFDSLER (88 aa).

This sequence belongs to the NrdR family. Zn(2+) is required as a cofactor.

Functionally, negatively regulates transcription of bacterial ribonucleotide reductase nrd genes and operons by binding to NrdR-boxes. This chain is Transcriptional repressor NrdR, found in Deinococcus deserti (strain DSM 17065 / CIP 109153 / LMG 22923 / VCD115).